The sequence spans 415 residues: ATP-dependent RNA helicase RhlB (415 aa).

The Q motif signature appears at 9–37 (QRFSALPLHPIVRGALAKKGFDFCTPIQA). In terms of domain architecture, Helicase ATP-binding spans 40–218 (LPISLNGRDV…FEDMNEPEYI (179 aa)). 53–60 (AQTGTGKT) lines the ATP pocket. Positions 164 to 167 (DEAD) match the DEAD box motif. Residues 241–389 (DKMALLLTLM…VSQYETEALL (149 aa)) enclose the Helicase C-terminal domain.

The protein belongs to the DEAD box helicase family. RhlB subfamily. As to quaternary structure, component of the RNA degradosome, which is a multiprotein complex involved in RNA processing and mRNA degradation.

Its subcellular location is the cytoplasm. It catalyses the reaction ATP + H2O = ADP + phosphate + H(+). Functionally, DEAD-box RNA helicase involved in RNA degradation. Has RNA-dependent ATPase activity and unwinds double-stranded RNA. The polypeptide is ATP-dependent RNA helicase RhlB (Haemophilus influenzae (strain ATCC 51907 / DSM 11121 / KW20 / Rd)).